Reading from the N-terminus, the 83-residue chain is RNA-binding protein Hfq (83 aa).

The Sm domain maps to 11–71 (DTFLNFVRKN…ISTIMPGQPI (61 aa)).

The protein belongs to the Hfq family. As to quaternary structure, homohexamer.

In terms of biological role, RNA chaperone that binds small regulatory RNA (sRNAs) and mRNAs to facilitate mRNA translational regulation in response to envelope stress, environmental stress and changes in metabolite concentrations. Also binds with high specificity to tRNAs. The chain is RNA-binding protein Hfq from Methylocella silvestris (strain DSM 15510 / CIP 108128 / LMG 27833 / NCIMB 13906 / BL2).